The sequence spans 855 residues: MAIKSTEKHTPMMQQYLRLKSENPDILLFYRMGDFYELFYDDAKRASQLLEISLTKRGSSAGEPIPMAGLPYHAVEGYLAKLVQQGESVAICEQIGDPATSKGPVERKVVRIVTPGTVTDEALLPERFDNLIAAIYHHKGQFGYATLDITSGRFKVSEPSTEESMLAELQRTSPTELLFSEDFEPVHLLEKRNGNRRRPVWEFELDTAKQQLNQQFGTRDLVGFGVENAEFGLCAAGCLIQYVKDTQRTTLPHIRSIVMDRQDDSVILDAATRRNLEITQNLAGGFNHTLSEVLDHTSTAMGSRLLKRWLHQPIRTHDVLNQRLDAIGELKSNGLYAELSPQLKQIGDVERILARLALRSARPRDLARLRNALQQLPELAQSTQAFEQTHLLELASLAQPIDSICELLERAVKENPPVVIRDGGVLADGYNEELDQWRDLANGAALFLSKLEQEERERHDIDTLKVGYNNVHGFYIQISKGQSHKAPAHYVRRQTLKNAERYIIPELKAHEDKVLSSKSKALAIEKKLWEELFDQLLPHLEQLQLMANAISELDVLSNLAERADTLNYCRPTLSSDIGMKIEGGRHPVVEQVMSDPFIANPINLNDDRKMLIITGPNMGGKSTYMRQTALIALMAHVGCYVPADSAHIGLLDRIFTRIGASDDLASGRSTFMVEMTETANILHNATQHSLVLMDEIGRGTSTYDGLSLAWASAEWLATKINAMTLFATHYFELTELPNLFSGLANVHLDAVEHGDEIAFMHAVQEGAANKSYGLAVASLAGVPKAVIKKAKQKLQQLENGQPKNQSLTSTQIKQEHQLSLIPEPSEVEEALAKVNPDDLSPRQALEALYRLKALL.

An ATP-binding site is contributed by 615-622 (GPNMGGKS).

It belongs to the DNA mismatch repair MutS family.

This protein is involved in the repair of mismatches in DNA. It is possible that it carries out the mismatch recognition step. This protein has a weak ATPase activity. This is DNA mismatch repair protein MutS from Aliivibrio salmonicida (strain LFI1238) (Vibrio salmonicida (strain LFI1238)).